The chain runs to 63 residues: Large ribosomal subunit protein uL29 (63 aa).

This sequence belongs to the universal ribosomal protein uL29 family.

This chain is Large ribosomal subunit protein uL29, found in Ectopseudomonas mendocina (strain ymp) (Pseudomonas mendocina).